Consider the following 64-residue polypeptide: Large ribosomal subunit protein bL32 (64 aa).

Belongs to the bacterial ribosomal protein bL32 family.

This chain is Large ribosomal subunit protein bL32, found in Flavobacterium johnsoniae (strain ATCC 17061 / DSM 2064 / JCM 8514 / BCRC 14874 / CCUG 350202 / NBRC 14942 / NCIMB 11054 / UW101) (Cytophaga johnsonae).